A 215-amino-acid polypeptide reads, in one-letter code: MATPGFPSTEQRLGLYPVVDSLLWIERLLAAGVTTLQLRIKNADDAQVEQDIVAAIELGKRYQARLFINDYWQLAVKHGAYGVHLGQEDLEAADLAAIQQAGLRLGISTHDEHELAVAKTLRPSYIALGHIFPTQTKQMPSSPQGLASLSRQVKNTPDYPTVAIGGISIERVPHVLATGVGSVAVVSAITLASDWQRATAQLLHLIEGKELADEK.

Residues 37 to 41 and asparagine 69 contribute to the 4-amino-2-methyl-5-(diphosphooxymethyl)pyrimidine site; that span reads QLRIK. Mg(2+)-binding residues include aspartate 70 and aspartate 89. Serine 108 lines the 4-amino-2-methyl-5-(diphosphooxymethyl)pyrimidine pocket. 134 to 136 is a 2-[(2R,5Z)-2-carboxy-4-methylthiazol-5(2H)-ylidene]ethyl phosphate binding site; sequence TQT. Residue lysine 137 participates in 4-amino-2-methyl-5-(diphosphooxymethyl)pyrimidine binding. 2-[(2R,5Z)-2-carboxy-4-methylthiazol-5(2H)-ylidene]ethyl phosphate-binding positions include glycine 166 and 186 to 187; that span reads VS.

The protein belongs to the thiamine-phosphate synthase family. Mg(2+) serves as cofactor.

The catalysed reaction is 2-[(2R,5Z)-2-carboxy-4-methylthiazol-5(2H)-ylidene]ethyl phosphate + 4-amino-2-methyl-5-(diphosphooxymethyl)pyrimidine + 2 H(+) = thiamine phosphate + CO2 + diphosphate. The enzyme catalyses 2-(2-carboxy-4-methylthiazol-5-yl)ethyl phosphate + 4-amino-2-methyl-5-(diphosphooxymethyl)pyrimidine + 2 H(+) = thiamine phosphate + CO2 + diphosphate. It carries out the reaction 4-methyl-5-(2-phosphooxyethyl)-thiazole + 4-amino-2-methyl-5-(diphosphooxymethyl)pyrimidine + H(+) = thiamine phosphate + diphosphate. It functions in the pathway cofactor biosynthesis; thiamine diphosphate biosynthesis; thiamine phosphate from 4-amino-2-methyl-5-diphosphomethylpyrimidine and 4-methyl-5-(2-phosphoethyl)-thiazole: step 1/1. Functionally, condenses 4-methyl-5-(beta-hydroxyethyl)thiazole monophosphate (THZ-P) and 2-methyl-4-amino-5-hydroxymethyl pyrimidine pyrophosphate (HMP-PP) to form thiamine monophosphate (TMP). This Yersinia pestis (strain Pestoides F) protein is Thiamine-phosphate synthase.